Reading from the N-terminus, the 249-residue chain is uncharacterized protein (249 aa).

Positions 1-43 (MRRGRSRPAGAAPAALLLPLLLLLPLTGCDRLAAAPAEHAAAA) are cleaved as a signal peptide. The tract at residues 40–59 (AAAAGDPAQDADRGRRLPPV) is disordered. The 176-residue stretch at 68 to 243 (PVVFLTYDDG…TIEEQGLRVG (176 aa)) folds into the NodB homology domain.

This is an uncharacterized protein from Streptomyces coelicolor (strain ATCC BAA-471 / A3(2) / M145).